The sequence spans 80 residues: DNA-binding protein HU-like (80 aa).

Belongs to the bacterial histone-like protein family.

Functionally, histone-like DNA-binding protein which is capable of wrapping DNA to stabilize it, and thus to prevent its denaturation under extreme environmental conditions. The sequence is that of DNA-binding protein HU-like from Rickettsia conorii (strain ATCC VR-613 / Malish 7).